The sequence spans 646 residues: Vitamin K-dependent protein S (646 aa).

Positions 1–12 (GHASQVLVRKRR) are excised as a propeptide. In terms of domain architecture, Gla spans 13 to 58 (ANSMLEETKKGNLERECIEELCNKEEAREVFENDPETDYFYPKYLG). 11 positions are modified to 4-carboxyglutamate: E18, E19, E26, E28, E31, E32, E37, E38, E41, E44, and E48. C29 and C34 are disulfide-bonded. Residues 59-87 (CLGSFRAKLFTATRRSANGYPDLRSCVNA) form a thrombin-sensitive region. In terms of domain architecture, EGF-like 1 spans 88 to 126 (IPDQCNPLPCSEEGYLNCKDGQATFTCICKPGWQGEKCE). Cystine bridges form between C92-C105, C97-C114, C116-C125, C132-C146, C142-C155, C157-C170, C176-C188, C183-C197, C199-C212, C218-C227, C223-C236, C238-C253, and C420-C446. (3R)-3-hydroxyaspartate is present on D107. In terms of domain architecture, EGF-like 2; calcium-binding spans 128–171 (DINECKDPTNINGGCSQICDNTAGSYHCSCKSGFVMLANEKDCK). The region spanning 172 to 213 (DMDECSVKPSVCGTAVCKNTPGDFECECSEGYRYNPTAKSCE) is the EGF-like 3; calcium-binding domain. The EGF-like 4; calcium-binding domain maps to 214-254 (DIDECSENMCAQLCVNYPGGYSCYCDGKKGFKLAQDKKSCE). Laminin G-like domains lie at 270–446 (LLYL…KKHC) and 455–636 (YYPG…AHSC). N-linked (GlcNAc...) asparagine glycans are attached at residues N470 and N480. A disulfide bond links C609 and C636.

In terms of assembly, interacts with C4b-binding protein, a regulator of the complex system. In rabbit plasma however, protein S appears to be present only in free form. Post-translationally, the iron and 2-oxoglutarate dependent 3-hydroxylation of aspartate and asparagine is (R) stereospecific within EGF domains. As to expression, plasma.

It localises to the secreted. Functionally, anticoagulant plasma protein; it is a cofactor to activated protein C in the degradation of coagulation factors Va and VIIIa. It helps to prevent coagulation and stimulating fibrinolysis. The sequence is that of Vitamin K-dependent protein S (PROS1) from Oryctolagus cuniculus (Rabbit).